The chain runs to 1411 residues: Uveal autoantigen with coiled-coil domains and ankyrin repeats (1411 aa).

M1 carries the post-translational modification N-acetylmethionine. A disordered region spans residues 1-30 (MKSLKSRLWKQDAPGPTSPSSPTAVASTQS). Residues 13–30 (APGPTSPSSPTAVASTQS) are compositionally biased toward low complexity. ANK repeat units lie at residues 69 to 98 (EGRSAFHVVASKGNLECLNAILTHGIDVAT), 102 to 131 (AGRNALHLAAKYGHALCLQKLLQYNCPTEH), 135 to 164 (QGRTALHDAVMADCPSSIQLLCDHGASVNA), 168 to 197 (DGRTPLVLATQMCRPTICQLLIDRGADVNS), 201 to 230 (QNRTALMLGCEYGCRDAVEVLVKNGADLTL), and 234 to 263 (LGHDSSYYARIGDNLDILNLLKTASENTNK). A disordered region spans residues 263–301 (KGRELWRKGPPLQQRNLSHTQDEGSVKSTQREQREPHSF). S280 is subject to Phosphoserine. The span at 282–301 (TQDEGSVKSTQREQREPHSF) shows a compositional bias: basic and acidic residues. Coiled-coil stretches lie at residues 299-379 (HSFQ…NRFK), 442-624 (SENE…LKEL), and 652-1380 (VKRL…AIYR). The interval 1006 to 1031 (GLKEQLSEQTHKCRQRDEEVKKGKQE) is disordered.

In terms of assembly, component of the apoptosome complex, composed of APAF1, pro-caspase-9 and UACA. In the complex, it probably interacts directly with APAF1. Interacts with LGALS3, ARF6 and ACTB. Interacts with RAB39A. In terms of tissue distribution, highly expressed in heart, liver, kidney and testis. Weakly expressed in lung and skeletal muscle. Not expressed in brain and spleen.

Its subcellular location is the nucleus. It localises to the cytoplasm. The protein localises to the cytoskeleton. In terms of biological role, regulates APAF1 expression and plays an important role in the regulation of stress-induced apoptosis. Promotes apoptosis by regulating three pathways, apoptosome up-regulation, LGALS3/galectin-3 down-regulation and NF-kappa-B inactivation. Regulates the redistribution of APAF1 into the nucleus after proapoptotic stress. Down-regulates the expression of LGALS3 by inhibiting NFKB1. Functionally, modulates isoactin dynamics to regulate the morphological alterations required for cell growth and motility. Interaction with ARF6 may modulate cell shape and motility after injury. May be involved in multiple neurite formation. This is Uveal autoantigen with coiled-coil domains and ankyrin repeats (Uaca) from Mus musculus (Mouse).